Reading from the N-terminus, the 338-residue chain is Transcription factor GRA2 (338 aa).

Disordered stretches follow at residues 171–230 (CQDS…PHYA) and 256–277 (TQHE…DGGS). Polar residues predominate over residues 174–203 (SGVSQPSNLADDTLGQGQPVSTVVQPQHPG). A basic motif region spans residues 223–236 (KRQRPHYAIEKRYR). The region spanning 223 to 303 (KRQRPHYAIE…NQATLCIRQL (81 aa)) is the bHLH domain. Positions 237–303 (AGLQERFEAL…NQATLCIRQL (67 aa)) are helix-loop-helix motif.

It localises to the nucleus. Its function is as follows. Transcription factor that specifically regulates the expression of the gene cluster that mediates the biosynthesis of gramillins A and B, bicyclic lipopeptides that induce cell death in maize leaves but not in wheat leaves. The chain is Transcription factor GRA2 (GRA2) from Gibberella zeae (strain ATCC MYA-4620 / CBS 123657 / FGSC 9075 / NRRL 31084 / PH-1) (Wheat head blight fungus).